We begin with the raw amino-acid sequence, 375 residues long: Trichodiene synthase (375 aa).

The protein belongs to the trichodiene synthase family.

It catalyses the reaction (2E,6E)-farnesyl diphosphate = trichodiene + diphosphate. It participates in sesquiterpene biosynthesis; trichothecene biosynthesis. TS is a member of the terpene cyclase group of enzymes. It catalyzes the isomerization and cyclization of farnesyl pyro-phosphate to form trichodiene, the first cyclic intermediate in the biosynthetic pathway for trichothecenes. It serves to branch trichothecene biosynthesis from the isoprenoid pathway. This chain is Trichodiene synthase (TRI5), found in Fusarium cerealis (Fusarium crookwellense).